The sequence spans 74 residues: Conotoxin MiK41 (74 aa).

The N-terminal stretch at 1 to 22 (MKLTCVLIITVLFLTACQLTTA) is a signal peptide. A propeptide spanning residues 23–45 (VTYSRGEHKHRALMSTGTNYRLP) is cleaved from the precursor. Disulfide bonds link cysteine 48–cysteine 62, cysteine 55–cysteine 66, and cysteine 61–cysteine 73.

Belongs to the conotoxin O1 superfamily. In terms of tissue distribution, expressed by the venom duct.

The protein localises to the secreted. The sequence is that of Conotoxin MiK41 from Conus miles (Soldier cone).